The primary structure comprises 204 residues: Large ribosomal subunit protein uL4 (204 aa).

The interval 49–76 (KTKGISDVSGTTAKPYGQKRTGRARQGS) is disordered.

It belongs to the universal ribosomal protein uL4 family. Part of the 50S ribosomal subunit.

Functionally, one of the primary rRNA binding proteins, this protein initially binds near the 5'-end of the 23S rRNA. It is important during the early stages of 50S assembly. It makes multiple contacts with different domains of the 23S rRNA in the assembled 50S subunit and ribosome. Its function is as follows. Forms part of the polypeptide exit tunnel. In Wolbachia sp. subsp. Drosophila simulans (strain wRi), this protein is Large ribosomal subunit protein uL4.